Here is a 194-residue protein sequence, read N- to C-terminus: A-type ATP synthase subunit E (194 aa).

A disordered region spans residues 35 to 56 (DAEADADQIREEREAEVERTIE). Residues 41–56 (DQIREEREAEVERTIE) show a composition bias toward basic and acidic residues.

This sequence belongs to the V-ATPase E subunit family. As to quaternary structure, has multiple subunits with at least A(3), B(3), C, D, E, F, H, I and proteolipid K(x).

It is found in the cell membrane. In terms of biological role, component of the A-type ATP synthase that produces ATP from ADP in the presence of a proton gradient across the membrane. The chain is A-type ATP synthase subunit E from Haloarcula marismortui (strain ATCC 43049 / DSM 3752 / JCM 8966 / VKM B-1809) (Halobacterium marismortui).